The following is a 1174-amino-acid chain: Carboxylic acid reductase (1174 aa).

Residues His-297, Ser-392, 413-414, Thr-418, Asp-491, 503-506, Lys-512, and Lys-612 each bind AMP; these read EG and YLDR. The Carrier domain occupies 651 to 726; the sequence is APVLVTVCRA…ALADYVEAAR (76 aa). Ser-685 carries the post-translational modification O-(pantetheine 4'-phosphoryl)serine. Residues 787–791, Arg-814, Arg-824, 854–855, 880–882, 919–920, Tyr-956, and Lys-960 contribute to the NADP(+) site; these read TGFLG, DK, PAA, and TS.

Belongs to the ATP-dependent AMP-binding enzyme family. Carboxylic acid reductase subfamily. The cofactor is pantetheine 4'-phosphate.

It carries out the reaction a carboxylate + ATP + NADPH + H(+) = an aldehyde + AMP + diphosphate + NADP(+). Functionally, catalyzes the ATP- and NADPH-dependent reduction of carboxylic acids to the corresponding aldehydes. Catalyzes the reduction of a wide range of aliphatic fatty acids (C6-C18) into their corresponding aldehydes. Can also reduce benzoate to benzaldehyde. Has a preference for NADPH over NADH as the electron donor. The sequence is that of Carboxylic acid reductase from Mycobacterium marinum (strain ATCC BAA-535 / M).